The sequence spans 101 residues: Small ribosomal subunit protein uS14 (101 aa).

This sequence belongs to the universal ribosomal protein uS14 family. As to quaternary structure, part of the 30S ribosomal subunit. Contacts proteins S3 and S10.

In terms of biological role, binds 16S rRNA, required for the assembly of 30S particles and may also be responsible for determining the conformation of the 16S rRNA at the A site. The sequence is that of Small ribosomal subunit protein uS14 from Aeromonas hydrophila subsp. hydrophila (strain ATCC 7966 / DSM 30187 / BCRC 13018 / CCUG 14551 / JCM 1027 / KCTC 2358 / NCIMB 9240 / NCTC 8049).